The primary structure comprises 126 residues: Large ribosomal subunit protein bL12 (126 aa).

This sequence belongs to the bacterial ribosomal protein bL12 family. In terms of assembly, homodimer. Part of the ribosomal stalk of the 50S ribosomal subunit. Forms a multimeric L10(L12)X complex, where L10 forms an elongated spine to which 2 to 4 L12 dimers bind in a sequential fashion. Binds GTP-bound translation factors.

Forms part of the ribosomal stalk which helps the ribosome interact with GTP-bound translation factors. Is thus essential for accurate translation. The protein is Large ribosomal subunit protein bL12 of Trichlorobacter lovleyi (strain ATCC BAA-1151 / DSM 17278 / SZ) (Geobacter lovleyi).